The chain runs to 551 residues: Glucose-6-phosphate isomerase (551 aa).

The active-site Proton donor is the Glu356. Active-site residues include His387 and Lys515.

It belongs to the GPI family.

The protein resides in the cytoplasm. The catalysed reaction is alpha-D-glucose 6-phosphate = beta-D-fructose 6-phosphate. Its pathway is carbohydrate biosynthesis; gluconeogenesis. It participates in carbohydrate degradation; glycolysis; D-glyceraldehyde 3-phosphate and glycerone phosphate from D-glucose: step 2/4. Functionally, catalyzes the reversible isomerization of glucose-6-phosphate to fructose-6-phosphate. This Blochmanniella pennsylvanica (strain BPEN) protein is Glucose-6-phosphate isomerase.